The primary structure comprises 385 residues: Homoserine O-succinyltransferase (385 aa).

An AB hydrolase-1 domain is found at asparagine 51–leucine 359. Serine 157 functions as the Nucleophile in the catalytic mechanism. A substrate-binding site is contributed by arginine 227. Residues aspartate 322 and histidine 355 contribute to the active site. Aspartate 356 is a substrate binding site.

It belongs to the AB hydrolase superfamily. MetX family. In terms of assembly, homodimer.

It is found in the cytoplasm. It catalyses the reaction L-homoserine + succinyl-CoA = O-succinyl-L-homoserine + CoA. It participates in amino-acid biosynthesis; L-methionine biosynthesis via de novo pathway; O-succinyl-L-homoserine from L-homoserine: step 1/1. Transfers a succinyl group from succinyl-CoA to L-homoserine, forming succinyl-L-homoserine. The protein is Homoserine O-succinyltransferase of Marinomonas sp. (strain MWYL1).